The following is a 117-amino-acid chain: uncharacterized protein (117 aa).

This is an uncharacterized protein from Sinorhizobium fredii (strain NBRC 101917 / NGR234).